Consider the following 149-residue polypeptide: Hydrogenase expression/formation protein HupT (149 aa).

Belongs to the HupJ family.

The protein is Hydrogenase expression/formation protein HupT (hupT) of Azotobacter chroococcum mcd 1.